The primary structure comprises 72 residues: Translation initiation factor IF-1 2 (72 aa).

The 72-residue stretch at 1–72 (MAKEDVIEMQ…TKGRIVFRTK (72 aa)) folds into the S1-like domain.

Belongs to the IF-1 family. As to quaternary structure, component of the 30S ribosomal translation pre-initiation complex which assembles on the 30S ribosome in the order IF-2 and IF-3, IF-1 and N-formylmethionyl-tRNA(fMet); mRNA recruitment can occur at any time during PIC assembly.

Its subcellular location is the cytoplasm. One of the essential components for the initiation of protein synthesis. Stabilizes the binding of IF-2 and IF-3 on the 30S subunit to which N-formylmethionyl-tRNA(fMet) subsequently binds. Helps modulate mRNA selection, yielding the 30S pre-initiation complex (PIC). Upon addition of the 50S ribosomal subunit IF-1, IF-2 and IF-3 are released leaving the mature 70S translation initiation complex. The chain is Translation initiation factor IF-1 2 from Azoarcus sp. (strain BH72).